A 55-amino-acid chain; its full sequence is MAKGIREKIRLVSSAGTGHFYTTDKNKRNMPGKFEIKKFDPVVRQHVMYKEAKIK.

The protein belongs to the bacterial ribosomal protein bL33 family.

The polypeptide is Large ribosomal subunit protein bL33 (Vibrio atlanticus (strain LGP32) (Vibrio splendidus (strain Mel32))).